A 182-amino-acid chain; its full sequence is Prorelaxin (182 aa).

Residues 1-24 (MPRLFSYLLGVWLLLSQLPREIPG) form the signal peptide. Pyrrolidone carboxylic acid is present on Gln25. 3 disulfides stabilise this stretch: Cys34–Cys169, Cys46–Cys182, and Cys168–Cys173. The propeptide at 57 to 154 (SLEEPQLETG…LKNLGLDKHS (98 aa)) is connecting peptide. The propeptide occupies 159-160 (LF).

This sequence belongs to the insulin family. In terms of assembly, heterodimer of a B chain and an A chain linked by two disulfide bonds.

Its subcellular location is the secreted. Relaxin is an ovarian hormone that acts with estrogen to produce dilatation of the birth canal in many mammals. This Sus scrofa (Pig) protein is Prorelaxin (RLN).